Consider the following 118-residue polypeptide: Vesicle-associated membrane protein 1 (118 aa).

Low complexity predominate over residues 1 to 15 (MSAPAQPPAEGTEGA). Residues 1–36 (MSAPAQPPAEGTEGAAPGGGPPGPPPNMTSNRRLQQ) form a disordered region. Over 1 to 96 (MSAPAQPPAE…KRKYWWKNCK (96 aa)) the chain is Cytoplasmic. Residues 33-93 (RLQQTQAQVE…AKLKRKYWWK (61 aa)) enclose the v-SNARE coiled-coil homology domain. Serine 63 carries the phosphoserine modification. The chain crosses the membrane as a helical; Anchor for type IV membrane protein span at residues 97 to 116 (MMIMLGAICAIIVVVIVIYF). At 117–118 (FT) the chain is on the vesicular side.

Belongs to the synaptobrevin family. As to quaternary structure, interacts with VAPA and VAPB. In terms of processing, (Microbial infection) Targeted and hydrolyzed by C.botulinum neurotoxin type X (BoNT/X) which hydrolyzes the 68-Arg-|-Ala-69 bond and probably inhibits neurotransmitter release. It remains unknown whether BoNT/X is ever produced, or what organisms it targets. Highly expressed in the zona incerta and rostral periolivary region of the brain. Other neuroanatomical regions show negligible expression. Expressed in the retina, expression observed in the outer segments of the photoreceptors, in the outer and inner plexiform layers, and in a subset of ganglion cells.

The protein localises to the cytoplasmic vesicle. It is found in the secretory vesicle. The protein resides in the synaptic vesicle membrane. Its subcellular location is the synapse. It localises to the synaptosome. The protein localises to the cytoplasmic vesicle membrane. In terms of biological role, involved in the targeting and/or fusion of transport vesicles to their target membrane. In Mus musculus (Mouse), this protein is Vesicle-associated membrane protein 1 (Vamp1).